A 731-amino-acid polypeptide reads, in one-letter code: MSIFDRMTTSKEAAMKYRQFCVSKKKEVWDALIYHAKYAKNIEKVYDMTTVLQRVQQECLMFALEKGVGQPDIRDAAELIFPLAMQKVVIKVLRPYFMSHFTNYRLAMYLPHRKIDHGIDLNQELWTPEKKEICGQYVQDFNPFVNELKTGILNANRHMNAALSVYIRELAATLVMHEKAAFDNELRCSMFQEIMESLRIWSDQVTMQDAFHLISDTIYKDVFQMLSKNAYEMIAVDFPVKFRSLITMKYCLLRTNNHGRVDFTNYLIDQVNTKLLVASVDTKDILKAYAACVESLREMDNSCVVMHKVCGVIREYLKRRPDTVQQIISYITSNKKNELEKDMSLQSKTVRSAMMDEEELKGVNDDFLPENMETLGWENWMPNPTDATVGDGAPGHQGVDVFNMLVSVYGSKELFVKEYRNLLAERLSSSDNKDPEFEKRYLDLLKLRFQYSELQHCEVMLRDVIHSLDIDKKFEDMSERSAGNYDVPIIPISACIISSHYWPKLETEKTEALMPQPLQAAMDVYQETYLDVKRDRKLEWLRSVGCVEVSINIDGVEVDRTIPNMYALLLFLFLEKETWTTAEVVEKMGMSVVVTRKRLEWLVKQGFICMNPIISSDTWTLTRNPSGISIVRPGTPDLEDDEDVEPEENSDMVDALEQYWGYTRNFIANHAPNGEVKAERMHRVYRMFGSPTSAGPTLDHVSAFLQRKVALGLLTCINGSYRIIQEKKDGE.

This sequence belongs to the cullin family. As to quaternary structure, the APC/C is probably composed of at least 12 subunits: apc-2, apc-10, apc-11, cdc-26, emb-1, emb-27, emb-30, mat-1, mat-2, mat-3, such-1 and gfi-3.

It functions in the pathway protein modification; protein ubiquitination. Functionally, probable component of the anaphase promoting complex/cyclosome (APC/C), a cell cycle-regulated ubiquitin ligase that controls progression through mitosis and the G1 phase of the cell cycle. The APC/C complex acts by mediating ubiquitination and subsequent degradation of target proteins. Developmental role in early embryogenesis and the metaphase to anaphase transition in meiosis and mitosis. This is Anaphase-promoting complex subunit 2 from Caenorhabditis elegans.